A 707-amino-acid chain; its full sequence is NADP(+)-dependent formate dehydrogenase subunit beta (707 aa).

Heterotetramer composed of two alpha (FdhA) and two beta (FdhB) subunits.

Its subcellular location is the cytoplasm. It catalyses the reaction formate + NADP(+) = CO2 + NADPH. Its activity is regulated as follows. Activity is very sensitive to oxygen. The activity in growing cells is enhanced when selenite and molybdate are added together to the growth medium. Tungstate replaces and is better than molybdate. Selenite is incorporated into the enzyme. Requires a sulfhydryl compound for activity. Inhibited by cyanide, EDTA, hypophosphite and mercaptoethanol. Sulfite inhibits the activity with NADP but not with methyl viologen as electron acceptor. Component of a dehydrogenase that catalyzes the NADP-dependent reduction of CO(2) to formate, the first step in the synthesis of the methyl group of acetate during synthesis of acetate from CO(2). In vitro, can use methyl viologen and benzyl viologen in addition to its natural electron acceptor. In Moorella thermoacetica (Clostridium thermoaceticum), this protein is NADP(+)-dependent formate dehydrogenase subunit beta.